The chain runs to 150 residues: CCAAT/enhancer-binding protein gamma (150 aa).

Residue K3 forms a Glycyl lysine isopeptide (Lys-Gly) (interchain with G-Cter in SUMO2) linkage. The interval 27–94 (GLQQVPQLVP…QKAQDTLQRV (68 aa)) is disordered. A compositionally biased stretch (low complexity) spans 28–37 (LQQVPQLVPA). The span at 56-72 (SPMDRNSDEYRQRRERN) shows a compositional bias: basic and acidic residues. The 64-residue stretch at 62–125 (SDEYRQRRER…SVLKDLFLEH (64 aa)) folds into the bZIP domain. The interval 66–93 (RQRRERNNMAVKKSRLKSKQKAQDTLQR) is basic motif. The segment at 97–118 (LKEENERLEAKIKLLTKELSVL) is leucine-zipper.

This sequence belongs to the bZIP family. C/EBP subfamily. Binds DNA as a dimer and can form stable heterodimers with CEBPA and CEBPB. Interacts with ZNF638; this interaction increases transcriptional activation.

The protein localises to the nucleus. In terms of biological role, transcription factor that binds to the promoter and the enhancer regions of target genes. Binds to the promoter and the enhancer of the alpha-1-fetoprotein gene. Binds to the enhancer element PRE-I (positive regulatory element-I) of the IL-4 gene. Binds to the promoter and the enhancer of the immunoglobulin heavy chain. Binds to GPE1, a cis-acting element in the G-CSF gene promoter. In Rattus norvegicus (Rat), this protein is CCAAT/enhancer-binding protein gamma (Cebpg).